A 354-amino-acid polypeptide reads, in one-letter code: Protein-arginine kinase (354 aa).

One can recognise a Phosphagen kinase C-terminal domain in the interval 24-254 (IVLSSRIRLA…QQIIQQEKMA (231 aa)). Residues 27 to 31 (SSRIR), His-92, Arg-125, 176 to 180 (RASVM), and 207 to 212 (RGIYGE) contribute to the ATP site. The short motif at 337-342 (RDYRRA) is the RDXXRA motif of the pArg binding pocket involved in allosteric regulation element.

This sequence belongs to the ATP:guanido phosphotransferase family.

It catalyses the reaction L-arginyl-[protein] + ATP = N(omega)-phospho-L-arginyl-[protein] + ADP + H(+). Its activity is regulated as follows. Appears to be allosterically activated by the binding of pArg-containing polypeptides to the pArg-binding pocket localized in the C-terminal domain of McsB. Its function is as follows. Catalyzes the specific phosphorylation of arginine residues in a large number of proteins. Is part of the bacterial stress response system. Protein arginine phosphorylation has a physiologically important role and is involved in the regulation of many critical cellular processes, such as protein homeostasis, motility, competence, and stringent and stress responses, by regulating gene expression and protein activity. This is Protein-arginine kinase from Bacillus cereus (strain ATCC 10987 / NRS 248).